A 217-amino-acid polypeptide reads, in one-letter code: UPF0502 protein Smlt0097 (217 aa).

Belongs to the UPF0502 family.

The protein is UPF0502 protein Smlt0097 of Stenotrophomonas maltophilia (strain K279a).